Reading from the N-terminus, the 775-residue chain is Dipeptidyl peptidase 4 (775 aa).

Positions Met-1–Ala-15 are cleaved as a signal peptide. 4 N-linked (GlcNAc...) asparagine glycosylation sites follow: Asn-81, Asn-111, Asn-170, and Asn-219. Active-site charge relay system residues include Ser-613, Asp-690, and His-725.

It belongs to the peptidase S9B family.

It is found in the secreted. It catalyses the reaction Release of an N-terminal dipeptide, Xaa-Yaa-|-Zaa-, from a polypeptide, preferentially when Yaa is Pro, provided Zaa is neither Pro nor hydroxyproline.. In terms of biological role, extracellular dipeptidyl-peptidase which removes N-terminal dipeptides sequentially from polypeptides having unsubstituted N-termini provided that the penultimate residue is proline. Contributes to pathogenicity. The protein is Dipeptidyl peptidase 4 (DPP4) of Trichophyton equinum (Horse ringworm fungus).